Consider the following 172-residue polypeptide: Adenine phosphoribosyltransferase (172 aa).

Belongs to the purine/pyrimidine phosphoribosyltransferase family. As to quaternary structure, homodimer.

Its subcellular location is the cytoplasm. It catalyses the reaction AMP + diphosphate = 5-phospho-alpha-D-ribose 1-diphosphate + adenine. Its pathway is purine metabolism; AMP biosynthesis via salvage pathway; AMP from adenine: step 1/1. Its function is as follows. Catalyzes a salvage reaction resulting in the formation of AMP, that is energically less costly than de novo synthesis. This is Adenine phosphoribosyltransferase from Prochlorococcus marinus (strain NATL2A).